Consider the following 95-residue polypeptide: Putative per-hexamer repeat protein 4 (95 aa).

This is Putative per-hexamer repeat protein 4 (Phxr4) from Mus musculus (Mouse).